The sequence spans 72 residues: MAIQSKYSNTQVESLIAEILVVLEKHKAPTDLSLMALGNCVTHLLERKVPSESRQAVAEQFAKALAQSVKSN.

This sequence belongs to the UPF0352 family.

The sequence is that of UPF0352 protein SO_2176 from Shewanella oneidensis (strain ATCC 700550 / JCM 31522 / CIP 106686 / LMG 19005 / NCIMB 14063 / MR-1).